Consider the following 356-residue polypeptide: Photosystem II protein D1 (356 aa).

A run of 3 helical transmembrane segments spans residues 29-46 (YVGWFGTLMIPTLLTATT), 118-133 (HFLIGIFCYMGRQWEL), and 142-156 (WICVAYSAPVSAATA). His-118 contributes to the chlorophyll a binding site. Pheophytin a is bound at residue Tyr-126. Asp-170 and Glu-189 together coordinate [CaMn4O5] cluster. The chain crosses the membrane as a helical span at residues 197–218 (FHMLGVAGVFGGSLFSAMHGSL). His-198 is a binding site for chlorophyll a. A quinone contacts are provided by residues His-215 and 264–265 (SF). Fe cation is bound at residue His-215. His-272 provides a ligand contact to Fe cation. A helical transmembrane segment spans residues 274–288 (FLGAWPVIGIWFTAM). Residues His-332, Glu-333, Asp-342, and Ala-344 each coordinate [CaMn4O5] cluster. Residues 345 to 356 (SAEPVSAPVING) constitute a propeptide that is removed on maturation.

The protein belongs to the reaction center PufL/M/PsbA/D family. In terms of assembly, PSII is composed of 1 copy each of membrane proteins PsbA, PsbB, PsbC, PsbD, PsbE, PsbF, PsbH, PsbI, PsbJ, PsbK, PsbL, PsbM, PsbT, PsbX, PsbY, PsbZ, Psb30/Ycf12, peripheral proteins PsbO, CyanoQ (PsbQ), PsbU, PsbV and a large number of cofactors. It forms dimeric complexes. The cofactor is The D1/D2 heterodimer binds P680, chlorophylls that are the primary electron donor of PSII, and subsequent electron acceptors. It shares a non-heme iron and each subunit binds pheophytin, quinone, additional chlorophylls, carotenoids and lipids. D1 provides most of the ligands for the Mn4-Ca-O5 cluster of the oxygen-evolving complex (OEC). There is also a Cl(-1) ion associated with D1 and D2, which is required for oxygen evolution. The PSII complex binds additional chlorophylls, carotenoids and specific lipids.. Post-translationally, tyr-161 forms a radical intermediate that is referred to as redox-active TyrZ, YZ or Y-Z. C-terminally processed by CtpA; processing is essential to allow assembly of the oxygen-evolving complex and thus photosynthetic growth.

Its subcellular location is the cellular thylakoid membrane. The catalysed reaction is 2 a plastoquinone + 4 hnu + 2 H2O = 2 a plastoquinol + O2. Functionally, photosystem II (PSII) is a light-driven water:plastoquinone oxidoreductase that uses light energy to abstract electrons from H(2)O, generating O(2) and a proton gradient subsequently used for ATP formation. It consists of a core antenna complex that captures photons, and an electron transfer chain that converts photonic excitation into a charge separation. The D1/D2 (PsbA/PsbD) reaction center heterodimer binds P680, the primary electron donor of PSII as well as several subsequent electron acceptors. This chain is Photosystem II protein D1, found in Crocosphaera subtropica (strain ATCC 51142 / BH68) (Cyanothece sp. (strain ATCC 51142)).